We begin with the raw amino-acid sequence, 286 residues long: Bifunctional protein FolD (286 aa).

NADP(+) is bound by residues 166–168 and Ile-232; that span reads GAS.

This sequence belongs to the tetrahydrofolate dehydrogenase/cyclohydrolase family. In terms of assembly, homodimer.

The catalysed reaction is (6R)-5,10-methylene-5,6,7,8-tetrahydrofolate + NADP(+) = (6R)-5,10-methenyltetrahydrofolate + NADPH. It catalyses the reaction (6R)-5,10-methenyltetrahydrofolate + H2O = (6R)-10-formyltetrahydrofolate + H(+). It functions in the pathway one-carbon metabolism; tetrahydrofolate interconversion. In terms of biological role, catalyzes the oxidation of 5,10-methylenetetrahydrofolate to 5,10-methenyltetrahydrofolate and then the hydrolysis of 5,10-methenyltetrahydrofolate to 10-formyltetrahydrofolate. The polypeptide is Bifunctional protein FolD (Marinobacter nauticus (strain ATCC 700491 / DSM 11845 / VT8) (Marinobacter aquaeolei)).